Here is a 527-residue protein sequence, read N- to C-terminus: Laccase-5 (527 aa).

The N-terminal stretch at 1 to 23 (MGKYHSFVNVVALSLSLSGRVFG) is a signal peptide. In terms of domain architecture, Plastocyanin-like 1 spans 25–150 (IGPVTDLTIS…DGLRGPLVVY (126 aa)). 2 N-linked (GlcNAc...) asparagine glycosylation sites follow: Asn-74 and Asn-77. Positions 87, 89, 132, and 134 each coordinate Cu cation. Cystine bridges form between Cys-108–Cys-516 and Cys-140–Cys-230. N-linked (GlcNAc...) asparagine glycans are attached at residues Asn-156, Asn-209, Asn-233, Asn-242, Asn-276, Asn-317, Asn-358, Asn-366, Asn-393, and Asn-402. A Plastocyanin-like 2 domain is found at 162–306 (VDDDTTVITL…GGVNSAILRY (145 aa)). In terms of domain architecture, Plastocyanin-like 3 spans 373–498 (TVPVLLQILS…AGFAIVWGED (126 aa)). Residues His-425, His-428, His-430, His-480, Cys-481, His-482, and His-486 each contribute to the Cu cation site.

Belongs to the multicopper oxidase family. Homodimer. Requires Cu cation as cofactor.

Its subcellular location is the secreted. The catalysed reaction is 4 hydroquinone + O2 = 4 benzosemiquinone + 2 H2O. In terms of biological role, lignin degradation and detoxification of lignin-derived products. This chain is Laccase-5 (LCC5), found in Trametes villosa (White-rot fungus).